Consider the following 645-residue polypeptide: Crossover junction endonuclease mus-81 (645 aa).

2 disordered regions span residues 98–119 and 219–310; these read LAAAGAVQDEQPPPPKRARTAR and GVAG…EDRK. Residues 223–252 are compositionally biased toward polar residues; that stretch reads SANTSRNAIASGSGTSNPNRSENVNPNRQD. Residues 296-305 show a composition bias toward acidic residues; it reads DSDDEDPKYD. The ERCC4 domain maps to 353 to 459; it reads ELVLDTREVQ…NVVYIIENYN (107 aa).

The protein belongs to the XPF family. In terms of assembly, interacts with eme-1. Mg(2+) serves as cofactor.

The protein resides in the nucleus. Its function is as follows. Interacts with eme-1 to form a DNA structure-specific endonuclease with substrate preference for branched DNA structures with a 5'-end at the branch nick. Typical substrates include 3'-flap structures, D-loops, replication forks and nicked Holliday junctions. May be required in mitosis for the processing of stalled or collapsed replication fork intermediates. May be required in meiosis for the repair of meiosis-specific double strand breaks subsequent to single-end invasion (SEI). The protein is Crossover junction endonuclease mus-81 (mus-81) of Neurospora crassa (strain ATCC 24698 / 74-OR23-1A / CBS 708.71 / DSM 1257 / FGSC 987).